We begin with the raw amino-acid sequence, 263 residues long: Acyl-[acyl-carrier-protein]--UDP-N-acetylglucosamine O-acyltransferase (263 aa).

The protein belongs to the transferase hexapeptide repeat family. LpxA subfamily. In terms of assembly, homotrimer.

It localises to the cytoplasm. The enzyme catalyses a (3R)-hydroxyacyl-[ACP] + UDP-N-acetyl-alpha-D-glucosamine = a UDP-3-O-[(3R)-3-hydroxyacyl]-N-acetyl-alpha-D-glucosamine + holo-[ACP]. The protein operates within glycolipid biosynthesis; lipid IV(A) biosynthesis; lipid IV(A) from (3R)-3-hydroxytetradecanoyl-[acyl-carrier-protein] and UDP-N-acetyl-alpha-D-glucosamine: step 1/6. In terms of biological role, involved in the biosynthesis of lipid A, a phosphorylated glycolipid that anchors the lipopolysaccharide to the outer membrane of the cell. This Campylobacter jejuni subsp. jejuni serotype O:2 (strain ATCC 700819 / NCTC 11168) protein is Acyl-[acyl-carrier-protein]--UDP-N-acetylglucosamine O-acyltransferase.